The chain runs to 78 residues: Acyl carrier protein (78 aa).

One can recognise a Carrier domain in the interval 1 to 76 (MALFEDIQAV…DVVKYIEDNK (76 aa)). S36 is modified (O-(pantetheine 4'-phosphoryl)serine).

The protein belongs to the acyl carrier protein (ACP) family. 4'-phosphopantetheine is transferred from CoA to a specific serine of apo-ACP by AcpS. This modification is essential for activity because fatty acids are bound in thioester linkage to the sulfhydryl of the prosthetic group.

The protein localises to the cytoplasm. The protein operates within lipid metabolism; fatty acid biosynthesis. Carrier of the growing fatty acid chain in fatty acid biosynthesis. This chain is Acyl carrier protein, found in Helicobacter pylori (strain J99 / ATCC 700824) (Campylobacter pylori J99).